The following is a 91-amino-acid chain: Molybdopterin synthase sulfur carrier subunit (91 aa).

Glycine 91 carries the post-translational modification 1-thioglycine; alternate. Glycine 91 is modified (glycyl adenylate; alternate).

The protein belongs to the MoaD family. MOCS2A subfamily. In terms of assembly, heterotetramer; composed of 2 small (MOCS2A) and 2 large (MOCS2B) subunits. Post-translationally, C-terminal thiocarboxylation occurs in 2 steps, it is first acyl-adenylated (-COAMP) via the hesA/moeB/thiF part of MOCS3, then thiocarboxylated (-COSH) via the rhodanese domain of MOCS3.

It localises to the cytoplasm. It functions in the pathway cofactor biosynthesis; molybdopterin biosynthesis. Its function is as follows. Acts as a sulfur carrier required for molybdopterin biosynthesis. Component of the molybdopterin synthase complex that catalyzes the conversion of precursor Z into molybdopterin by mediating the incorporation of 2 sulfur atoms into precursor Z to generate a dithiolene group. In the complex, serves as sulfur donor by being thiocarboxylated (-COSH) at its C-terminus by MOCS3. After interaction with MOCS2B, the sulfur is then transferred to precursor Z to form molybdopterin. This is Molybdopterin synthase sulfur carrier subunit from Anopheles gambiae (African malaria mosquito).